A 292-amino-acid polypeptide reads, in one-letter code: ATP synthase gamma chain (292 aa).

This sequence belongs to the ATPase gamma chain family. F-type ATPases have 2 components, CF(1) - the catalytic core - and CF(0) - the membrane proton channel. CF(1) has five subunits: alpha(3), beta(3), gamma(1), delta(1), epsilon(1). CF(0) has three main subunits: a, b and c.

It localises to the cell membrane. Functionally, produces ATP from ADP in the presence of a proton gradient across the membrane. The gamma chain is believed to be important in regulating ATPase activity and the flow of protons through the CF(0) complex. This is ATP synthase gamma chain from Streptococcus thermophilus (strain CNRZ 1066).